A 725-amino-acid chain; its full sequence is Ribonuclease R (725 aa).

One can recognise an RNB domain in the interval Arg264–Phe592. In terms of domain architecture, S1 motif spans Gly644–Ile725.

It belongs to the RNR ribonuclease family. RNase R subfamily.

Its subcellular location is the cytoplasm. The catalysed reaction is Exonucleolytic cleavage in the 3'- to 5'-direction to yield nucleoside 5'-phosphates.. In terms of biological role, 3'-5' exoribonuclease that releases 5'-nucleoside monophosphates and is involved in maturation of structured RNAs. In Mycoplasma genitalium (strain ATCC 33530 / DSM 19775 / NCTC 10195 / G37) (Mycoplasmoides genitalium), this protein is Ribonuclease R.